The following is a 44-amino-acid chain: MVQCVRHFVLPRLKKDAGLPFFFPLITHSQPLNRGAFFCPGVRR.

The polypeptide is pyr operon leader peptide (pyrL) (Escherichia coli O157:H7).